The primary structure comprises 331 residues: Tryptophan--tRNA ligase (331 aa).

Residues 10–12 and 18–19 each bind ATP; these read QPS and GN. The short motif at 11–19 is the 'HIGH' region element; sequence PSGQLTLGN. D133 serves as a coordination point for L-tryptophan. Residues 145–147, V184, and 193–197 contribute to the ATP site; these read GED and KMSKS. The short motif at 193-197 is the 'KMSKS' region element; sequence KMSKS.

Belongs to the class-I aminoacyl-tRNA synthetase family. Homodimer.

It is found in the cytoplasm. The enzyme catalyses tRNA(Trp) + L-tryptophan + ATP = L-tryptophyl-tRNA(Trp) + AMP + diphosphate + H(+). Functionally, catalyzes the attachment of tryptophan to tRNA(Trp). The sequence is that of Tryptophan--tRNA ligase from Listeria innocua serovar 6a (strain ATCC BAA-680 / CLIP 11262).